A 149-amino-acid polypeptide reads, in one-letter code: HTH-type transcriptional regulator LrpB (149 aa).

Residues 3–64 (IDSIDFQILQ…VVDELKMGFS (62 aa)) form the HTH asnC-type domain. Positions 22-41 (WKEIGEKIHMTGQAVGNRIK) form a DNA-binding region, H-T-H motif.

Negative regulation of glyA transcription and kinB-dependent sporulation. The polypeptide is HTH-type transcriptional regulator LrpB (lrpB) (Bacillus subtilis (strain 168)).